The chain runs to 207 residues: MAEYTLPDLDYDYGALEPHISGQINELHHSKHHAAYVKGVNDAVAKLDEARANGDHAAIFLNEKNLAFHLGGHVNHSIWWKNLSPNGGDKPTGDLAAAIDDQFGSFDKFQAQFTAAANGLQGSGWAVLGYDSLGDRLLTFQLYDQQANVPLGIIPLLQVDMWEHAFYLQYKNVKADYVKAFWNVVNWEDVQNRYAAATSKTNGLIFG.

Positions 28, 76, 160, and 164 each coordinate Mn(2+).

This sequence belongs to the iron/manganese superoxide dismutase family. It depends on Mn(2+) as a cofactor.

It catalyses the reaction 2 superoxide + 2 H(+) = H2O2 + O2. Destroys superoxide anion radicals which are normally produced within the cells and which are toxic to biological systems. The sequence is that of Superoxide dismutase [Mn] (sodA) from Mycolicibacterium fortuitum (Mycobacterium fortuitum).